We begin with the raw amino-acid sequence, 989 residues long: R3H domain-containing protein 2 (989 aa).

Disordered stretches follow at residues 23-71 and 106-147; these read EESV…AKSN and SCPS…QEYT. Positions 36-56 are enriched in basic and acidic residues; the sequence is PSKEEIEKESEDTSLRQETQR. At Ser37 the chain carries Phosphoserine. Positions 58 to 71 are enriched in basic residues; the sequence is TSNHGHARKRAKSN. The segment covering 109-143 has biased composition (basic and acidic residues); sequence SDKEEEKSTKDVSEKEDKDKNKEKVPRRMLSRDSS. A Phosphoserine modification is found at Ser143. Positions 169–232 constitute an R3H domain; the sequence is RMMLLKLEQE…AVIINKTSNT (64 aa). Residues 233-303 form the SUZ domain; that stretch reads RIPEQRFSEH…VRERIFARET (71 aa). Disordered stretches follow at residues 267–288, 306–390, 416–479, 493–524, 674–738, 751–793, and 848–867; these read DDNQ…EERE, NGYL…ISRP, TAQQ…FQPP, ASTG…GYMQ, GTSP…PSMV, RGQK…SLSN, and QGQS…LKSA. Over residues 277–288 the composition is skewed to basic and acidic residues; that stretch reads DGRRSKSIEERE. Residues 320–331 are compositionally biased toward low complexity; it reads SRTSSSRQSSTD. 3 positions are modified to phosphoserine: Ser344, Ser347, and Ser363. The segment covering 416–428 has biased composition (low complexity); that stretch reads TAQQQQQQQQQLP. Composition is skewed to polar residues over residues 454-466 and 493-517; these read PFGQ…QGST and ASTG…QQVL. A compositionally biased stretch (pro residues) spans 695-704; sequence SPSPCSPPQM. Residues 705–727 are compositionally biased toward low complexity; that stretch reads PQQYSGVSPSGPGVVVMQLNVPN. Residues 761 to 771 are compositionally biased toward polar residues; the sequence is PESSPQANTQM. The span at 772-790 shows a compositional bias: low complexity; that stretch reads SSSPVTSPTQSPAPSPVTS. A phosphoserine mark is found at Ser866 and Ser868. Residues Thr869 and Thr873 each carry the phosphothreonine modification.

The protein localises to the nucleus. The protein is R3H domain-containing protein 2 (R3HDM2) of Bos taurus (Bovine).